The sequence spans 192 residues: LOB domain-containing protein 32 (192 aa).

Residues 4 to 105 (NRCAVCKILN…QDIESAVNEL (102 aa)) form the LOB domain.

It belongs to the LOB domain-containing protein family.

The sequence is that of LOB domain-containing protein 32 (LBD32) from Arabidopsis thaliana (Mouse-ear cress).